The chain runs to 251 residues: Thiamine thiazole synthase (251 aa).

Residues Ser-34, 53–54 (EK), Gly-61, Val-125, and 151–153 (HVD) contribute to the NAD(+) site. 2 residues coordinate Fe cation: Asp-153 and His-168. Met-216 serves as a coordination point for NAD(+). Residue Arg-226 coordinates glycine.

It belongs to the THI4 family. As to quaternary structure, homooctamer; tetramer of dimers. Fe(2+) is required as a cofactor.

It catalyses the reaction hydrogen sulfide + glycine + NAD(+) = ADP-5-ethyl-4-methylthiazole-2-carboxylate + nicotinamide + 3 H2O + H(+). The protein operates within cofactor biosynthesis; thiamine diphosphate biosynthesis. Functionally, involved in the biosynthesis of the thiazole moiety of thiamine. Catalyzes the conversion of NAD and glycine to adenosine diphosphate 5-(2-hydroxyethyl)-4-methylthiazole-2-carboxylate (ADT), an adenylated thiazole intermediate, using free sulfide as a source of sulfur. This is Thiamine thiazole synthase from Thermococcus kodakarensis (strain ATCC BAA-918 / JCM 12380 / KOD1) (Pyrococcus kodakaraensis (strain KOD1)).